A 157-amino-acid polypeptide reads, in one-letter code: Ribosome maturation factor RimP (157 aa).

It belongs to the RimP family.

Its subcellular location is the cytoplasm. Its function is as follows. Required for maturation of 30S ribosomal subunits. In Lactococcus lactis subsp. cremoris (strain MG1363), this protein is Ribosome maturation factor RimP.